Reading from the N-terminus, the 254-residue chain is Type II methyl-directed restriction enzyme DpnI (254 aa).

This sequence belongs to the DpnI type II restriction endonuclease family.

It catalyses the reaction Endonucleolytic cleavage of DNA to give specific double-stranded fragments with terminal 5'-phosphates.. Its function is as follows. An M and P subtype restriction enzyme that recognizes the double-stranded, methylated sequence 5'-G(Me)ATC-3' and cleaves after A-2. The protein is Type II methyl-directed restriction enzyme DpnI of Streptococcus pneumoniae serotype 4 (strain ATCC BAA-334 / TIGR4).